The chain runs to 24 residues: FLPVVAGLAAKVLPSIICAVTKKC.

Residues Cys18 and Cys24 are joined by a disulfide bond.

Expressed by the skin glands.

The protein localises to the secreted. Functionally, antibacterial activity against Gram-positive bacterium S.aureus and Gram-negative bacterium E.coli. This Lithobates sylvaticus (Wood frog) protein is Brevinin-1SY.